The following is a 142-amino-acid chain: uncharacterized protein (142 aa).

A signal peptide spans 1 to 20 (MPSVNEFFIFFLIVWHTCEC). N80 carries an N-linked (GlcNAc...) asparagine glycan.

This is an uncharacterized protein from Dictyostelium discoideum (Social amoeba).